The primary structure comprises 275 residues: MTKDRIDRRFAALKAENRAGFVTYVMAGDPDAATTLSVLKGLPAAGADLIELGFPFSDPMAEGPTIQRAAQRGLKSGMTLQGTLDLVAAFREGDQDTPIILMGYLNPVLNKGFETFAALAAKAGVDGLIIVDCPPEEADPLSDALEAEGIALIRLAAPTTDDARLPMVVRRTSGFVYYVSVAGVTGVKSADAADVAPAVERLRKASGLPVAVGFGIRTPDQAAAVAKVADAAVVGSALVDEIESAAQLNENVTEKVLLKASELAKAVRSARVGTK.

Catalysis depends on Glu51, which acts as the Proton acceptor.

The protein belongs to the TrpA family. As to quaternary structure, tetramer of two alpha and two beta chains.

The enzyme catalyses (1S,2R)-1-C-(indol-3-yl)glycerol 3-phosphate + L-serine = D-glyceraldehyde 3-phosphate + L-tryptophan + H2O. The protein operates within amino-acid biosynthesis; L-tryptophan biosynthesis; L-tryptophan from chorismate: step 5/5. Its function is as follows. The alpha subunit is responsible for the aldol cleavage of indoleglycerol phosphate to indole and glyceraldehyde 3-phosphate. This chain is Tryptophan synthase alpha chain, found in Caulobacter vibrioides (strain ATCC 19089 / CIP 103742 / CB 15) (Caulobacter crescentus).